Consider the following 273-residue polypeptide: Tryptophan synthase alpha chain (273 aa).

Residues Glu-49 and Asp-60 each act as proton acceptor in the active site.

Belongs to the TrpA family. In terms of assembly, tetramer of two alpha and two beta chains.

It catalyses the reaction (1S,2R)-1-C-(indol-3-yl)glycerol 3-phosphate + L-serine = D-glyceraldehyde 3-phosphate + L-tryptophan + H2O. Its pathway is amino-acid biosynthesis; L-tryptophan biosynthesis; L-tryptophan from chorismate: step 5/5. Functionally, the alpha subunit is responsible for the aldol cleavage of indoleglycerol phosphate to indole and glyceraldehyde 3-phosphate. The chain is Tryptophan synthase alpha chain from Albidiferax ferrireducens (strain ATCC BAA-621 / DSM 15236 / T118) (Rhodoferax ferrireducens).